Consider the following 219-residue polypeptide: Small ribosomal subunit protein uS3 (219 aa).

Residues 38 to 106 (IREYIENRLK…RVHINIFEVK (69 aa)) form the KH type-2 domain.

Belongs to the universal ribosomal protein uS3 family. As to quaternary structure, part of the 30S ribosomal subunit. Forms a tight complex with proteins S10 and S14.

In terms of biological role, binds the lower part of the 30S subunit head. Binds mRNA in the 70S ribosome, positioning it for translation. The chain is Small ribosomal subunit protein uS3 from Halalkalibacterium halodurans (strain ATCC BAA-125 / DSM 18197 / FERM 7344 / JCM 9153 / C-125) (Bacillus halodurans).